The primary structure comprises 623 residues: MAAAPRACKGHGRPLPVLLLLLLLALPPLGGPPGAAAYFPEERWSPESPLQAPRVLIALLARNAAHALPATLGALERLRHPRERTALWVATDHNADNTSAVLREWLVAVKGLYHSVEWRPSEEPRSYPDEEGPKHWSDSRYEHVMKLRQAALKSARDMWADYILFVDADNLILNPDTLTLLIAENKTVVAPMLDSRAAYSNFWCGMTSQGYYKRTPAYIPIRKRERRGCFAVPMVHSTFLIDLRKAASRNLAFYPPHPDYTWSFDDIIVFAFSCKQAEVQMYVCNKEVYGFLPVPLRSHSTLQDEAESFMHVQLEVMVKHPPSEPSRFISVPTKTPDKMGFDEVFMINLKRRQDRRERMLRALEEQEIACRLVEAVDGKAMNTSQVEALGIQMLPGYRDPYHGRPLTKGELGCFLSHYNIWKEVVDRGLQKSLVFEDDLRFEIFFKRRLMNLMQDVEREGLDWDLIYVGRKRMQVEHPEKAVPRVRNLVEADYSYWTLAYVISLQGARKLLAARPLSKMLPVDEFLPVMFDKHPVSEYKAHFSPRDLRAFSVEPLLIYPTHYTGDDGYVSDTETSVVWNNEHVKTDWDRAKSQKMREQQALSREAKNSDVLQSPLDSAARDEL.

Residues 1–30 (MAAAPRACKGHGRPLPVLLLLLLLALPPLG) form the signal peptide. N-linked (GlcNAc...) asparagine glycosylation is found at Asn97, Asn185, and Asn382. Positions 589–607 (RAKSQKMREQQALSREAKN) are enriched in basic and acidic residues. Residues 589–623 (RAKSQKMREQQALSREAKNSDVLQSPLDSAARDEL) are disordered. The Prevents secretion from ER signature appears at 620 to 623 (RDEL).

It belongs to the glycosyltransferase 25 family. In terms of processing, N-glycosylated.

The protein localises to the endoplasmic reticulum lumen. The enzyme catalyses (5R)-5-hydroxy-L-lysyl-[collagen] + UDP-alpha-D-galactose = (5R)-5-O-(beta-D-galactosyl)-5-hydroxy-L-lysyl-[collagen] + UDP + H(+). Functionally, beta-galactosyltransferase that transfers beta-galactose to hydroxylysine residues of type I collagen. By acting on collagen glycosylation, facilitates the formation of collagen triple helix. Also involved in the biosynthesis of collagen type IV. The sequence is that of Procollagen galactosyltransferase 1 (COLGALT1) from Bos taurus (Bovine).